A 276-amino-acid chain; its full sequence is Ribosomal RNA large subunit methyltransferase E (276 aa).

Residues Gly52, Phe54, Asp72, Asp90, and Asp114 each coordinate S-adenosyl-L-methionine. The active-site Proton acceptor is the Lys154. Low complexity predominate over residues 203–249; that stretch reads RAAPTANATPTPTSTSTSTPTSTSTPTSTSTSTPAPTLTQTQTQTPK. The disordered stretch occupies residues 203 to 276; that stretch reads RAAPTANATP…AKTGASRRTR (74 aa). Over residues 265 to 276 the composition is skewed to basic residues; sequence AKAKTGASRRTR.

Belongs to the class I-like SAM-binding methyltransferase superfamily. RNA methyltransferase RlmE family.

The protein resides in the cytoplasm. The catalysed reaction is uridine(2552) in 23S rRNA + S-adenosyl-L-methionine = 2'-O-methyluridine(2552) in 23S rRNA + S-adenosyl-L-homocysteine + H(+). Specifically methylates the uridine in position 2552 of 23S rRNA at the 2'-O position of the ribose in the fully assembled 50S ribosomal subunit. This chain is Ribosomal RNA large subunit methyltransferase E, found in Anaeromyxobacter sp. (strain Fw109-5).